We begin with the raw amino-acid sequence, 79 residues long: Putative membrane protein insertion efficiency factor (79 aa).

The protein belongs to the UPF0161 family.

It localises to the cell inner membrane. In terms of biological role, could be involved in insertion of integral membrane proteins into the membrane. The chain is Putative membrane protein insertion efficiency factor from Rippkaea orientalis (strain PCC 8801 / RF-1) (Cyanothece sp. (strain PCC 8801)).